Here is a 536-residue protein sequence, read N- to C-terminus: DNA damage-binding protein CMR1 (536 aa).

Residues 36–45 (REAGVDDTHR) are compositionally biased toward basic and acidic residues. Residues 36-72 (REAGVDDTHRTVVKKKKSPSVSRGRSASPKVAPVATR) form a disordered region. 6 WD repeats span residues 195–236 (LVYE…LSEN), 251–291 (FFTK…SNDI), 346–386 (LSDK…KKPE), 403–442 (DSRLSVSAVSYSPTDNTLVCNGYDDTIRLFDVGSDNLPDD), 456–495 (GRWTSILKARFKQDQDVFAIANMKRAIDIYDSQGQQLAHL), and 496–535 (PTATVPAVISWHPLRNWIAGGNSSGKIFLFTDETVKKEEE).

It belongs to the WD repeat DDB2/WDR76 family.

Functionally, DNA-binding protein that binds to both single- and double-stranded DNA. Binds preferentially to UV-damaged DNA. May be involved in DNA-metabolic processes. In Vanderwaltozyma polyspora (strain ATCC 22028 / DSM 70294 / BCRC 21397 / CBS 2163 / NBRC 10782 / NRRL Y-8283 / UCD 57-17) (Kluyveromyces polysporus), this protein is DNA damage-binding protein CMR1.